The primary structure comprises 304 residues: UDP-3-O-acyl-N-acetylglucosamine deacetylase (304 aa).

The Zn(2+) site is built by His-79, His-238, and Asp-242. His-265 (proton donor) is an active-site residue.

Belongs to the LpxC family. Zn(2+) serves as cofactor.

It carries out the reaction a UDP-3-O-[(3R)-3-hydroxyacyl]-N-acetyl-alpha-D-glucosamine + H2O = a UDP-3-O-[(3R)-3-hydroxyacyl]-alpha-D-glucosamine + acetate. Its pathway is glycolipid biosynthesis; lipid IV(A) biosynthesis; lipid IV(A) from (3R)-3-hydroxytetradecanoyl-[acyl-carrier-protein] and UDP-N-acetyl-alpha-D-glucosamine: step 2/6. In terms of biological role, catalyzes the hydrolysis of UDP-3-O-myristoyl-N-acetylglucosamine to form UDP-3-O-myristoylglucosamine and acetate, the committed step in lipid A biosynthesis. The protein is UDP-3-O-acyl-N-acetylglucosamine deacetylase of Laribacter hongkongensis (strain HLHK9).